Here is a 151-residue protein sequence, read N- to C-terminus: Putative UPF0320 protein YFL063W (151 aa).

The protein belongs to the UPF0320 family.

This is Putative UPF0320 protein YFL063W from Saccharomyces cerevisiae (strain ATCC 204508 / S288c) (Baker's yeast).